The following is a 2134-amino-acid chain: MSKLFSTVGRTVDEVLSVLNDEDTESYAGPDRTAVVGGGFLTTVDQSSVSTATMGSLQDVQYRTAVDIPGSRVTQGERFFLIDQREWNSTQSEWQLLGKIDIVKELLDQSYAVDGLLKYHSYARFGLDVIVQINPTSFQAGGLIAALVPYDQVDIESIAAMTTYCHGKLNCNINNVVRMKVPYIYSRGCYNLRNSAYSIWMLVIRVWSRLQLGSGTSTQITITTLARFVDLELHGLSPLVAQMMRNEFRLSSSSNIVNLANYEDARAKVSLALGQEGFSRDSSSTGGGMLYHFSQWTSIPCLAFIFTFPGTVGPGTRIWSTTVDPFSCNLRAFSTVHPTNLSSIAGMFCFWRGDIVFEFQVFRTKYHSGRLMFVYVPGDENTKISTLTATQASSGLTAVFDINGVNSTLVFRCPFISDTPYRVNPTTHKSPWPYATGKLVCYVYNRLNAPASVSPSVSINVYKSAVDLELYAPVYGVSPTNTSVFAQGKGDEGGFSSVPEVEQHVVEDKEPQGPLHVTPFGAVKAMEDPQLARKTPGTFPELAPGKPRHTVDHMDLYKFMGRAHYLWGHKFTKTDMQYTFQIPLSPIKEGFVTGTLRWFLSLFQLYRGSLDITMTFAGKTNVDGIVYFVPEGVAIETERKEQTPLLTLNYKTSVGAIRFNTGQTTNVQFRIPFYTPLEHIATHSKNAMDSVLGAITTQITNYSAQDEYLQVTYYISFNEDSQFSVPRAVPVVSSFTDTSSKTVMNTYWLDDDELVEESSHFSFDEIEEAQCSKCKIDLGDIVSCSGEKAKHFGVYVGDGVVHVDPEGNATSWFMKRKATVKKSKNLDKWCFALSPRIDRTLICETANLMVGREVEYDIFVKNCETYARGIASGDYGTKEGEKWKTLLSAVGVAAMTTTMMAMRHELLDTSLTKLPQKVGEVTDEVRKILEDTSAGVREFKEKVSSILRKTWPGKTSIKIMKWTCRIVKMCVGVGLCYMHGWDSKTVTAVVTMFSMDFLDLVIDGIEIGRMIIDELTTPKAQGLSEINQVLSIAKNAKDVIKMLIEIFCKVIERITGEHGKKIQWAQDKKEEIMNVLERAEKWITTSDDHSEGIECLKLVRSIQSVIRGEESLKELAGELRAVGTHVLNKLGRLDKPNAPILVRAEPTVLYLYGNRGGGKSLASMAIAVKLCKELGISHVEGIYTKPIMSDFWDGYAGQPVVIMDDLGQSTSDEDWTNFCQLVSSCPLRLNMANLEKKGTQFNSPFIIASSNLSHPCPKTVYCTDAIARRLHIKVKVSPKEEFSTHAMLDVAKAKKVGAYCNLDCLDLQKISDLASTPVSVQDIVLEMLHTNVDKQTLMGDIIQYWAQSNPREVFDTMAEGKNSGKYLWLFERLKTSKWYILGCVGAVLAVSALGVFAYHMIKNHFRDQQHDQSAYSVAIKPLRVVRLEQSDAQSVVDISNVVHGNLVRVGVGPNEARIHWLYNGLGVYDTYILMPYHGIKDADVDDDLYIERAGTIYSTNMKMVQVLFLESREGDLVLINVPRLPKFRDIRNHFSTEENIRRAEGMPGTLCTLDHERFTLVTESDLKMVEAATYVCEDDKGVRTDISVGRSWKAKACTVAGMCGGALVTSNNKMQNAIVGIHVAGGAHAISRVITKEMIEEMLKTRAQCSRIWKTEFVEEKISVGSKTKYHKSPLYDFCPQEVVKCPTKLFYQGEIDVMQVMLAKYSSPIVSEPSGYATVVEAYTNRMVSFFPEPRQLTYDECINGIEGLDAIDLKTSAGFPYNTLGLRKSDLIINGKMAHRLQQDVEKMEEDLHMNRSIQVVFTTCAKDELRPLSKVMLGKTRAIEACPVSFTILFRRYLGYALAQIQSHPGFHTGIAVGVDPDQDWHCMWYSIVTQCDLVVGLDFSNYDASLSPFMIYHAGRVLGQICGLDPRLVDRIMEPIVNSVHQLGSMRYYVHGSMPSGTPATSVLNSIINVVNICYVLCALEEISVFEVFKLFKILTYGDDVLLCIKKEYLDQKSFPLSSFVQGLEELGLSPTGADKMEVKVTPVHKMSFLKRTFYVDEWSICHPRISEETVYSMLAWKSDNASMKDLIETSIWFMFHHGPRKYVRFCTWLRGVLCRVGIGLYIPTYKELEVRYDRLVKYRFIDDNF.

Topologically, residues 1 to 1377 are cytoplasmic; sequence MSKLFSTVGR…WLFERLKTSK (1377 aa). The 102-residue stretch at 781-882 folds into the LRAT domain; it reads IVSCSGEKAK…GDYGTKEGEK (102 aa). Residues H791 and H802 contribute to the active site. C863 (acyl-thioester intermediate) is an active-site residue. The SF3 helicase domain occupies 1127 to 1289; it reads LNKLGRLDKP…EEFSTHAMLD (163 aa). Position 1153–1160 (1153–1160) interacts with ATP; sequence GNRGGGKS. An intramembrane segment occupies 1378-1392; sequence WYILGCVGAVLAVSA. The Cytoplasmic portion of the chain corresponds to 1393–2134; the sequence is LGVFAYHMIK…VKYRFIDDNF (742 aa). Y1415 carries the O-(5'-phospho-RNA)-tyrosine modification. A Peptidase C3 domain is found at 1431–1643; the sequence is DAQSVVDISN…ITKEMIEEML (213 aa). Residues H1477, D1515, and C1603 each act as for protease 3C activity in the active site. One can recognise a RdRp catalytic domain in the interval 1880 to 2001; the sequence is DLVVGLDFSN…CIKKEYLDQK (122 aa).

It belongs to the picornaviridae polyprotein family. In terms of processing, specific enzymatic cleavages by the viral protease in vivo yield a variety of precursors and mature proteins. During virion maturation, non-infectious particles are rendered infectious following cleavage of VP0. This maturation cleavage is followed by a conformational change of the particle. VPg is uridylylated by the polymerase and is covalently linked to the 5'-end of genomic RNA. This uridylylated form acts as a nucleotide-peptide primer for the polymerase.

The protein localises to the virion. It is found in the host cytoplasm. Its subcellular location is the host cytoplasmic vesicle membrane. The enzyme catalyses RNA(n) + a ribonucleoside 5'-triphosphate = RNA(n+1) + diphosphate. It catalyses the reaction a ribonucleoside 5'-triphosphate + H2O = a ribonucleoside 5'-diphosphate + phosphate + H(+). It carries out the reaction Selective cleavage of Gln-|-Gly bond in the poliovirus polyprotein. In other picornavirus reactions Glu may be substituted for Gln, and Ser or Thr for Gly.. Its function is as follows. Capsid proteins VP1, VP2, and VP3 form a closed capsid enclosing the viral positive strand RNA genome. All these proteins contain a beta-sheet structure called beta-barrel jelly roll. Together they form an icosahedral capsid (T=3) composed of 60 copies of each VP1, VP2, and VP3, with a diameter of approximately 300 Angstroms. VP1 is situated at the 12 fivefold axes, whereas VP2 and VP3 are located at the quasi-sixfold axes. Functionally, VP0 precursor is a component of immature procapsids. The N-terminal domain of VP0, protein VP4, is needed for the assembly of 12 pentamers into the icosahedral structure. Unlike other picornaviruses, AEV VP4 may not be myristoylated. In terms of biological role, protein 2B and 2BC precursor affect membrane integrity and cause an increase in membrane permeability. Associates with and induces structural rearrangements of intracellular membranes. It displays RNA-binding, nucleotide binding and NTPase activities. Its function is as follows. Protein 3A, via its hydrophobic domain, serves as membrane anchor. Functionally, protein 3B is covalently linked to the 5'-end of both the positive-strand and negative-strand genomic RNAs. It acts as a genome-linked replication primer. In terms of biological role, cysteine protease that generates mature viral proteins from the precursor polyprotein. In addition to its proteolytic activity, it binds to viral RNA, and thus influences viral genome replication. RNA and substrate bind cooperatively to the protease. RNA-directed RNA polymerase 3D-POL replicates genomic and antigenomic RNA by recognizing replications specific signals. This chain is Genome polyprotein, found in Avian encephalomyelitis virus (strain Van Reokel) (AEV).